Here is a 162-residue protein sequence, read N- to C-terminus: B-box zinc finger protein 23 (162 aa).

Zn(2+)-binding residues include C5, C8, C28, H33, C63, C66, C86, and H91. Residues 5 to 47 (CEVCEKAEAEVLCCSDEAVLCKPCDIKVHEANKLFQRHHRVAL) form a B box-type 1; atypical zinc finger. The B box-type 2; atypical zinc-finger motif lies at 63-101 (CDICQERKGYFFCLEDRAMLCNDCDEAIHTCNSHQRFLL). A disordered region spans residues 137–162 (QYSSEETEAGNSGEIVHKNPSVILSP).

It is found in the nucleus. Its function is as follows. Probable transcription factor that may be involved in seedling photomorphogenesis. This Arabidopsis thaliana (Mouse-ear cress) protein is B-box zinc finger protein 23.